Reading from the N-terminus, the 86-residue chain is UPF0297 protein STH1998 (86 aa).

It belongs to the UPF0297 family.

The sequence is that of UPF0297 protein STH1998 from Symbiobacterium thermophilum (strain DSM 24528 / JCM 14929 / IAM 14863 / T).